The sequence spans 1304 residues: Myosin-1 (1304 aa).

Residues 1–12 show a composition bias toward basic residues; the sequence is MAIVKRGVRTKN. Residues 1–24 form a disordered region; sequence MAIVKRGVRTKNKQSQQPSKSGIK. One can recognise a Myosin motor domain in the interval 36–730; that stretch reads VGVSDLTLLS…TLFALEDMRD (695 aa). 129–136 is an ATP binding site; the sequence is GESGAGKT. Residue Ser-364 is modified to Phosphoserine. The interval 413–496 is actin-binding; that stretch reads SIGILDIYGF…PGLFAALNDS (84 aa). IQ domains follow at residues 734–754 and 755–780; these read HNMAARIQRAWRRYIKRKDDA and ARLIQSAWKNKTHGNQFEQLRDYGNG. The region spanning 788–978 is the TH1 domain; sequence RRRMSMLGSR…TVTVRQGLPG (191 aa). Disordered regions lie at residues 963 to 1162 and 1214 to 1304; these read DSYK…TYKA and ECDP…DDDW. 2 stretches are compositionally biased toward polar residues: residues 964-983 and 1001-1012; these read SYKSGTVTVRQGLPGNSQNP and RGSNMRSTSSYQ. 3 stretches are compositionally biased toward low complexity: residues 1029 to 1052, 1072 to 1096, and 1120 to 1140; these read QPPVQQTQQRVVPPVQSQPKPQAQ, QPHAHPEQAAQAAQAAFHHTAPQAQ, and PSAPSRPARKTAPAPPAKKNV. Positions 1141 to 1156 are enriched in pro residues; it reads APPPPPAAASPPPKPK. Positions 1155–1217 constitute an SH3 domain; the sequence is PKFPTYKAAY…PAAYVVECDP (63 aa). 2 stretches are compositionally biased toward low complexity: residues 1217 to 1227 and 1236 to 1256; these read PPANSPAGNAK and LNSASQAQQSQQQAQAPNGAG. Residues 1292-1304 are compositionally biased toward acidic residues; that stretch reads DSDEEDEEDDDDW.

Belongs to the TRAFAC class myosin-kinesin ATPase superfamily. Myosin family. Phosphorylation of the TEDS site (Ser-364) is required for the polarization of the actin cytoskeleton. Phosphorylation probably activates the myosin-I ATPase activity.

The protein resides in the cytoplasm. It is found in the cytoskeleton. The protein localises to the actin patch. Type-I myosin implicated in the organization of the actin cytoskeleton. Required for proper actin cytoskeleton polarization. At the cell cortex, assembles in patch-like structures together with proteins from the actin-polymerizing machinery and promotes actin assembly. Functions as actin nucleation-promoting factor (NPF) for the Arp2/3 complex. The polypeptide is Myosin-1 (MYO1) (Debaryomyces hansenii (strain ATCC 36239 / CBS 767 / BCRC 21394 / JCM 1990 / NBRC 0083 / IGC 2968) (Yeast)).